Reading from the N-terminus, the 78-residue chain is Small ribosomal subunit protein uS17 (78 aa).

Belongs to the universal ribosomal protein uS17 family. In terms of assembly, part of the 30S ribosomal subunit.

One of the primary rRNA binding proteins, it binds specifically to the 5'-end of 16S ribosomal RNA. This Agrobacterium fabrum (strain C58 / ATCC 33970) (Agrobacterium tumefaciens (strain C58)) protein is Small ribosomal subunit protein uS17.